Consider the following 563-residue polypeptide: Arginine--tRNA ligase (563 aa).

The 'HIGH' region motif lies at 121 to 131; that stretch reads PNIAKPFSIGH.

Belongs to the class-I aminoacyl-tRNA synthetase family. Monomer.

The protein localises to the cytoplasm. It carries out the reaction tRNA(Arg) + L-arginine + ATP = L-arginyl-tRNA(Arg) + AMP + diphosphate. The polypeptide is Arginine--tRNA ligase (Streptococcus pyogenes serotype M6 (strain ATCC BAA-946 / MGAS10394)).